The primary structure comprises 217 residues: Peroxiredoxin (217 aa).

The Thioredoxin domain maps to 2–159 (VVIGEKFPEV…VVRLVKALQT (158 aa)). The Cysteine sulfenic acid (-SOH) intermediate role is filled by Cys46. Arg122 is a binding site for substrate.

Belongs to the peroxiredoxin family. Prx6 subfamily. As to quaternary structure, homodecamer. Pentamer of dimers that assemble into a ring structure.

The protein resides in the cytoplasm. It carries out the reaction a hydroperoxide + [thioredoxin]-dithiol = an alcohol + [thioredoxin]-disulfide + H2O. In terms of biological role, thiol-specific peroxidase that catalyzes the reduction of hydrogen peroxide and organic hydroperoxides to water and alcohols, respectively. Plays a role in cell protection against oxidative stress by detoxifying peroxides. In Methanococcus maripaludis (strain C5 / ATCC BAA-1333), this protein is Peroxiredoxin.